We begin with the raw amino-acid sequence, 89 residues long: Small ribosomal subunit protein uS15 (89 aa).

It belongs to the universal ribosomal protein uS15 family. As to quaternary structure, part of the 30S ribosomal subunit. Forms a bridge to the 50S subunit in the 70S ribosome, contacting the 23S rRNA.

One of the primary rRNA binding proteins, it binds directly to 16S rRNA where it helps nucleate assembly of the platform of the 30S subunit by binding and bridging several RNA helices of the 16S rRNA. In terms of biological role, forms an intersubunit bridge (bridge B4) with the 23S rRNA of the 50S subunit in the ribosome. The protein is Small ribosomal subunit protein uS15 of Photorhabdus luminescens (Xenorhabdus luminescens).